A 347-amino-acid polypeptide reads, in one-letter code: L-threonine 3-dehydrogenase (347 aa).

Cysteine 43 contributes to the Zn(2+) binding site. Active-site charge relay system residues include threonine 45 and histidine 48. Histidine 68, glutamate 69, cysteine 98, cysteine 101, cysteine 104, and cysteine 112 together coordinate Zn(2+). Residues isoleucine 180, aspartate 200, arginine 205, 267–269 (LSL), and 292–293 (IT) contribute to the NAD(+) site.

The protein belongs to the zinc-containing alcohol dehydrogenase family. As to quaternary structure, homotetramer. The cofactor is Zn(2+).

It is found in the cytoplasm. The enzyme catalyses L-threonine + NAD(+) = (2S)-2-amino-3-oxobutanoate + NADH + H(+). The protein operates within amino-acid degradation; L-threonine degradation via oxydo-reductase pathway; glycine from L-threonine: step 1/2. Catalyzes the NAD(+)-dependent oxidation of L-threonine to 2-amino-3-ketobutyrate. The protein is L-threonine 3-dehydrogenase of Bacillus subtilis (strain 168).